Here is a 954-residue protein sequence, read N- to C-terminus: Glucosidase 2 subunit alpha (954 aa).

A signal peptide spans 1 to 22 (MVLLKWLVCQLVFFTAFSHAFT). 5 N-linked (GlcNAc...) asparagine glycosylation sites follow: asparagine 114, asparagine 126, asparagine 142, asparagine 173, and asparagine 345. Aspartate 537 serves as the catalytic Nucleophile. Glutamate 540 is a catalytic residue. The active-site Proton donor is the aspartate 614. Asparagine 783, asparagine 791, asparagine 867, asparagine 880, asparagine 907, and asparagine 941 each carry an N-linked (GlcNAc...) asparagine glycan.

Belongs to the glycosyl hydrolase 31 family. In terms of assembly, heterodimer of a catalytic subunit alpha (ROT2) and a subunit beta (GTB1).

It localises to the endoplasmic reticulum. It catalyses the reaction N(4)-(alpha-D-Glc-(1-&gt;3)-alpha-D-Man-(1-&gt;2)-alpha-D-Man-(1-&gt;2)-alpha-D-Man-(1-&gt;3)-[alpha-D-Man-(1-&gt;2)-alpha-D-Man-(1-&gt;3)-[alpha-D-Man-(1-&gt;2)-alpha-D-Man-(1-&gt;6)]-alpha-D-Man-(1-&gt;6)]-beta-D-Man-(1-&gt;4)-beta-D-GlcNAc-(1-&gt;4)-beta-D-GlcNAc)-L-asparaginyl-[protein] + H2O = N(4)-(alpha-D-Man-(1-&gt;2)-alpha-D-Man-(1-&gt;2)-alpha-D-Man-(1-&gt;3)-[alpha-D-Man-(1-&gt;2)-alpha-D-Man-(1-&gt;3)-[alpha-D-Man-(1-&gt;2)-alpha-D-Man-(1-&gt;6)]-alpha-D-Man-(1-&gt;6)]-beta-D-Man-(1-&gt;4)-beta-D-GlcNAc-(1-&gt;4)-beta-D-GlcNAc)-L-asparaginyl-[protein] (N-glucan mannose isomer 9A1,2,3B1,2,3) + beta-D-glucose. The enzyme catalyses N(4)-(alpha-D-Glc-(1-&gt;3)-alpha-D-Glc-(1-&gt;3)-alpha-D-Man-(1-&gt;2)-alpha-D-Man-(1-&gt;2)-alpha-D-Man-(1-&gt;3)-[alpha-D-Man-(1-&gt;2)-alpha-D-Man-(1-&gt;3)-[alpha-D-Man-(1-&gt;2)-alpha-D-Man-(1-&gt;6)]-alpha-D-Man-(1-&gt;6)]-beta-D-Man-(1-&gt;4)-beta-D-GlcNAc-(1-&gt;4)-beta-D-GlcNAc)-L-asparaginyl-[protein] + H2O = N(4)-(alpha-D-Glc-(1-&gt;3)-alpha-D-Man-(1-&gt;2)-alpha-D-Man-(1-&gt;2)-alpha-D-Man-(1-&gt;3)-[alpha-D-Man-(1-&gt;2)-alpha-D-Man-(1-&gt;3)-[alpha-D-Man-(1-&gt;2)-alpha-D-Man-(1-&gt;6)]-alpha-D-Man-(1-&gt;6)]-beta-D-Man-(1-&gt;4)-beta-D-GlcNAc-(1-&gt;4)-beta-D-GlcNAc)-L-asparaginyl-[protein] + beta-D-glucose. Its pathway is glycan metabolism; N-glycan metabolism. Its activity is regulated as follows. Inhibited by glucose, maltose and nigerose, and by the antibiotic deoxynojirimycin. Functionally, catalytic subunit of glucosidase 2, which cleaves sequentially the 2 innermost alpha-1,3-linked glucose residues from the Glc(2)Man(9)GlcNAc(2) oligosaccharide precursor of immature glycoproteins. The protein is Glucosidase 2 subunit alpha (ROT2) of Saccharomyces cerevisiae (strain ATCC 204508 / S288c) (Baker's yeast).